The chain runs to 473 residues: Psoralen synthase (473 aa).

A helical membrane pass occupies residues 1–17; sequence YFFPLFLVTIFLYKWLV. The substrate specificity stretch occupies residues 350–355; it reads TAPLLV. Heme is bound at residue C425.

This sequence belongs to the cytochrome P450 family. Heme is required as a cofactor.

The protein localises to the microsome membrane. The catalysed reaction is (7S)-marmesin + reduced [NADPH--hemoprotein reductase] + O2 = psoralen + acetone + oxidized [NADPH--hemoprotein reductase] + 2 H2O + H(+). Its pathway is secondary metabolite biosynthesis. Functionally, involved in the biosynthesis of coumarins and furanocoumarins (FCs), natural products required for defense responses against attacks by predators with potential medical and agroindustrial usages such as anticoagulant, rodenticide and artificial vanilla substitutes. Involved in linear furanocumarin (psoralen) biosynthesis. Converts marmesin to psoralen and, with much lower affinity, 5-hydroxymarmesin to bergaptol. The sequence is that of Psoralen synthase from Pastinaca sativa (Wild parsnip).